The primary structure comprises 274 residues: Orotidine 5'-phosphate decarboxylase (274 aa).

Catalysis depends on Lys96, which acts as the Proton donor.

Belongs to the OMP decarboxylase family. Type 2 subfamily.

The catalysed reaction is orotidine 5'-phosphate + H(+) = UMP + CO2. The protein operates within pyrimidine metabolism; UMP biosynthesis via de novo pathway; UMP from orotate: step 2/2. The polypeptide is Orotidine 5'-phosphate decarboxylase (Bacteroides fragilis (strain YCH46)).